The following is a 536-amino-acid chain: Heat shock factor protein 2 (536 aa).

Glycyl lysine isopeptide (Lys-Gly) (interchain with G-Cter in SUMO2) cross-links involve residues lysine 2 and lysine 82. A DNA-binding region spans residues 7–112 (VPAFLSKLWT…LLENIKRKVS (106 aa)). A Nuclear localization signal motif is present at residues 108–122 (KRKVSSSKPEENKIR). Residues 119–192 (NKIRQEDLTK…VTLVQNNQLV (74 aa)) are hydrophobic repeat HR-A/B. Residues lysine 135, lysine 139, lysine 151, lysine 210, lysine 218, and lysine 237 each participate in a glycyl lysine isopeptide (Lys-Gly) (interchain with G-Cter in SUMO2) cross-link. The short motif at 195 to 210 (KRKRPLLLNTNGAQKK) is the Nuclear localization signal element. Residues 300-337 (QSGEQNEPARESLSSGSDGSSPLMSSAVQLNGSSSLTS) form a disordered region. Low complexity predominate over residues 311–325 (SLSSGSDGSSPLMSS). Residues 326–337 (AVQLNGSSSLTS) are compositionally biased toward polar residues. A hydrophobic repeat HR-C region spans residues 360 to 385 (LLDYLDSIDCSLEDFQAMLSGRQFSI). A disordered region spans residues 407-438 (NNTKSENKGLETTKNNVVQPVSEEGRKSKSKP). Positions 429 to 438 (EEGRKSKSKP) are enriched in basic and acidic residues.

Belongs to the HSF family. In terms of assembly, DNA-binding homotrimer in stressed or heat shocked cells, otherwise found as a homodimer.

Its subcellular location is the cytoplasm. The protein resides in the nucleus. Functionally, DNA-binding protein that specifically binds heat shock promoter elements (HSE) and activates transcription. In higher eukaryotes, HSF is unable to bind to the HSE unless the cells are heat shocked. This is Heat shock factor protein 2 (HSF2) from Homo sapiens (Human).